Consider the following 220-residue polypeptide: Chalcone--flavanone isomerase B (220 aa).

Residues threonine 50, asparagine 115, and threonine 192 each coordinate substrate.

The protein belongs to the chalcone isomerase family.

It catalyses the reaction a chalcone = a flavanone.. The protein operates within secondary metabolite biosynthesis; flavonoid biosynthesis. In terms of biological role, catalyzes the intramolecular cyclization of bicyclic chalcones into tricyclic (S)-flavanones. Responsible for the isomerization of 4,2',4',6'-tetrahydroxychalcone (also termed chalcone) into naringenin. This Petunia hybrida (Petunia) protein is Chalcone--flavanone isomerase B (CHI2).